Consider the following 432-residue polypeptide: MNIAVVGLSHKTAPVEVREKLSVPEDGLEGAIAQLCSYPHIEEVAILSTCNRLEIYIVTSETESGIREVTQFLSEWSHLPLRELRQHLFILLHQDAVMHLMRVAAGLDSLVIGEGQILSQVKNTHKLGQQYNGIGTILNRLFKQAITAGKRVRTETSIGTGAVSISSAAVELAQLKTPCLADCRVAVLGAGKMSRLVVQHLLAKGANQIAILNRSTERARELANQFSEASLQIHSLAELFNVITRYDLIFTGTSATEPLLDRSKLEPVLEVNQSLMIIDIAVPRNVHANVNELEQVQVFNVDDLKAVVAQNQESRRAMAMEAEALLEEELTAFDVWWRSLETVPTISSLRDKIETIREQELEKALSRLGSEFAEKHQEVIEALTRGIVNKILHDPMVQLRAQQDRETRRRAMQSLQMLFNLPVNDSVVNVNS.

Substrate-binding positions include T49–R52, S109, E114–Q116, and Q120. Catalysis depends on C50, which acts as the Nucleophile. G189–S194 lines the NADP(+) pocket.

Belongs to the glutamyl-tRNA reductase family. In terms of assembly, homodimer.

It carries out the reaction (S)-4-amino-5-oxopentanoate + tRNA(Glu) + NADP(+) = L-glutamyl-tRNA(Glu) + NADPH + H(+). It participates in porphyrin-containing compound metabolism; protoporphyrin-IX biosynthesis; 5-aminolevulinate from L-glutamyl-tRNA(Glu): step 1/2. Its pathway is porphyrin-containing compound metabolism; chlorophyll biosynthesis. Functionally, catalyzes the NADPH-dependent reduction of glutamyl-tRNA(Glu) to glutamate 1-semialdehyde (GSA). The protein is Glutamyl-tRNA reductase of Cyanothece sp. (strain PCC 7425 / ATCC 29141).